The sequence spans 366 residues: DNA integrity scanning protein DisA (366 aa).

Positions 21–159 (VHTLKGTLQR…EGKAHMLEQP (139 aa)) constitute a DAC domain. ATP is bound by residues Gly-88, Leu-106, and 119–123 (TRHRS).

Belongs to the DisA family. Homooctamer. Mg(2+) serves as cofactor.

It catalyses the reaction 2 ATP = 3',3'-c-di-AMP + 2 diphosphate. Its function is as follows. Participates in a DNA-damage check-point. DisA forms globular foci that rapidly scan along the chromosomes searching for lesions. In terms of biological role, also has diadenylate cyclase activity, catalyzing the condensation of 2 ATP molecules into cyclic di-AMP (c-di-AMP). c-di-AMP likely acts as a signaling molecule that may couple DNA integrity with a cellular process. This is DNA integrity scanning protein DisA from Corynebacterium glutamicum (strain R).